The following is a 139-amino-acid chain: D-ribose pyranase (139 aa).

The Proton donor role is filled by H20. Substrate is bound by residues D28, H106, and 128 to 130 (YAN).

It belongs to the RbsD / FucU family. RbsD subfamily. In terms of assembly, homodecamer.

The protein resides in the cytoplasm. It carries out the reaction beta-D-ribopyranose = beta-D-ribofuranose. The protein operates within carbohydrate metabolism; D-ribose degradation; D-ribose 5-phosphate from beta-D-ribopyranose: step 1/2. Functionally, catalyzes the interconversion of beta-pyran and beta-furan forms of D-ribose. This Escherichia coli (strain 55989 / EAEC) protein is D-ribose pyranase.